A 364-amino-acid chain; its full sequence is sn-glycerol-3-phosphate import ATP-binding protein UgpC (364 aa).

The region spanning 4-235 (VVLRNVRKTY…PATTFVASFI (232 aa)) is the ABC transporter domain. 37 to 44 (GPSGCGKS) provides a ligand contact to ATP.

Belongs to the ABC transporter superfamily. sn-glycerol-3-phosphate importer (TC 3.A.1.1.3) family. The complex is composed of two ATP-binding proteins (UgpC), two transmembrane proteins (UgpA and UgpE) and a solute-binding protein (UgpB).

It is found in the cell inner membrane. The catalysed reaction is sn-glycerol 3-phosphate(out) + ATP + H2O = sn-glycerol 3-phosphate(in) + ADP + phosphate + H(+). Its function is as follows. Part of the ABC transporter complex UgpBAEC involved in sn-glycerol-3-phosphate (G3P) import. Responsible for energy coupling to the transport system. This is sn-glycerol-3-phosphate import ATP-binding protein UgpC from Rhodopseudomonas palustris (strain HaA2).